The chain runs to 27 residues: NADH-ubiquinone oxidoreductase chain 1 (27 aa).

A helical transmembrane segment spans residues 3 to 23; it reads LIFPLVGSLLLVICVMVGVAF.

Belongs to the complex I subunit 1 family.

It localises to the mitochondrion inner membrane. The enzyme catalyses a ubiquinone + NADH + 5 H(+)(in) = a ubiquinol + NAD(+) + 4 H(+)(out). Its function is as follows. Core subunit of the mitochondrial membrane respiratory chain NADH dehydrogenase (Complex I) that is believed to belong to the minimal assembly required for catalysis. Complex I functions in the transfer of electrons from NADH to the respiratory chain. The immediate electron acceptor for the enzyme is believed to be ubiquinone. The chain is NADH-ubiquinone oxidoreductase chain 1 (ND1) from Simulium vittatum (Striped black fly).